Reading from the N-terminus, the 634-residue chain is RNA polymerase sigma factor RpoD (634 aa).

The segment at leucine 177–leucine 202 is disordered. The segment covering proline 182 to histidine 197 has biased composition (acidic residues). The interval methionine 385–threonine 455 is sigma-70 factor domain-2. An Interaction with polymerase core subunit RpoC motif is present at residues aspartate 409–glutamine 412. The sigma-70 factor domain-3 stretch occupies residues glutamate 464–alanine 541. Positions valine 554–histidine 607 are sigma-70 factor domain-4. The segment at residues leucine 580–serine 599 is a DNA-binding region (H-T-H motif). A disordered region spans residues proline 608–alanine 634.

Belongs to the sigma-70 factor family. RpoD/SigA subfamily. In terms of assembly, interacts transiently with the RNA polymerase catalytic core.

The protein localises to the cytoplasm. Its function is as follows. Sigma factors are initiation factors that promote the attachment of RNA polymerase to specific initiation sites and are then released. This sigma factor is the primary sigma factor during exponential growth. This Rickettsia conorii (strain ATCC VR-613 / Malish 7) protein is RNA polymerase sigma factor RpoD.